The sequence spans 104 residues: Large ribosomal subunit protein uL24 (104 aa).

Belongs to the universal ribosomal protein uL24 family. Part of the 50S ribosomal subunit.

Functionally, one of two assembly initiator proteins, it binds directly to the 5'-end of the 23S rRNA, where it nucleates assembly of the 50S subunit. Its function is as follows. One of the proteins that surrounds the polypeptide exit tunnel on the outside of the subunit. The sequence is that of Large ribosomal subunit protein uL24 from Bartonella henselae (strain ATCC 49882 / DSM 28221 / CCUG 30454 / Houston 1) (Rochalimaea henselae).